A 331-amino-acid chain; its full sequence is DNA-directed RNA polymerase subunit alpha (331 aa).

Residues 1–235 (MTMHIRWRGM…KHLNPFVQYR (235 aa)) form an alpha N-terminal domain (alpha-NTD) region. Residues 255–331 (QLEAKLNMTL…GMRVPNQPLF (77 aa)) form an alpha C-terminal domain (alpha-CTD) region.

It belongs to the RNA polymerase alpha chain family. In terms of assembly, homodimer. The RNAP catalytic core consists of 2 alpha, 1 beta, 1 beta' and 1 omega subunit. When a sigma factor is associated with the core the holoenzyme is formed, which can initiate transcription.

The enzyme catalyses RNA(n) + a ribonucleoside 5'-triphosphate = RNA(n+1) + diphosphate. In terms of biological role, DNA-dependent RNA polymerase catalyzes the transcription of DNA into RNA using the four ribonucleoside triphosphates as substrates. The protein is DNA-directed RNA polymerase subunit alpha of Rhodopirellula baltica (strain DSM 10527 / NCIMB 13988 / SH1).